The primary structure comprises 664 residues: Fructose-1,6-bisphosphatase class 3 (664 aa).

This sequence belongs to the FBPase class 3 family. Mn(2+) serves as cofactor.

The enzyme catalyses beta-D-fructose 1,6-bisphosphate + H2O = beta-D-fructose 6-phosphate + phosphate. It participates in carbohydrate biosynthesis; gluconeogenesis. The sequence is that of Fructose-1,6-bisphosphatase class 3 from Bacteroides fragilis (strain YCH46).